The primary structure comprises 417 residues: Peptidyl-Asp metalloendopeptidase (417 aa).

The first 23 residues, 1–23 (MKSKSMCTTVGLIAMCLAGSAAA), serve as a signal peptide directing secretion. His-331 is a Zn(2+) binding site. The active site involves Glu-332. The Zn(2+) site is built by His-335 and His-341.

Belongs to the peptidase M72 family. It depends on Zn(2+) as a cofactor.

The catalysed reaction is Cleavage of Xaa-|-Asp, Xaa-|-Glu and Xaa-|-cysteic acid bonds.. Functionally, metalloprotease, specifically cleaves on the N-terminal side of aspartyl, glutamyl and cysteic acid residues. This is Peptidyl-Asp metalloendopeptidase from Xanthomonas campestris pv. campestris (strain ATCC 33913 / DSM 3586 / NCPPB 528 / LMG 568 / P 25).